Consider the following 689-residue polypeptide: Glycine--tRNA ligase beta subunit (689 aa).

The protein belongs to the class-II aminoacyl-tRNA synthetase family. In terms of assembly, tetramer of two alpha and two beta subunits.

It localises to the cytoplasm. It carries out the reaction tRNA(Gly) + glycine + ATP = glycyl-tRNA(Gly) + AMP + diphosphate. The chain is Glycine--tRNA ligase beta subunit (glyS) from Pasteurella multocida (strain Pm70).